A 1032-amino-acid chain; its full sequence is uncharacterized protein (1032 aa).

3 disordered regions span residues 54–80 (NNNN…NNNN), 391–451 (QLQI…QTHL), and 884–934 (INNE…SKVK). Positions 884–907 (INNENNNENNNNYNGNINSNNNNN) are enriched in low complexity.

This is an uncharacterized protein from Dictyostelium discoideum (Social amoeba).